Reading from the N-terminus, the 500-residue chain is L-arabinose isomerase (500 aa).

Mn(2+) contacts are provided by glutamate 306, glutamate 333, histidine 349, and histidine 448.

It belongs to the arabinose isomerase family. Mn(2+) is required as a cofactor.

The enzyme catalyses beta-L-arabinopyranose = L-ribulose. The protein operates within carbohydrate degradation; L-arabinose degradation via L-ribulose; D-xylulose 5-phosphate from L-arabinose (bacterial route): step 1/3. In terms of biological role, catalyzes the conversion of L-arabinose to L-ribulose. This is L-arabinose isomerase from Koribacter versatilis (strain Ellin345).